The following is a 314-amino-acid chain: Secreted frizzled-related protein 5 (314 aa).

The signal sequence occupies residues 1-21 (MWVAWSARTAALALLLGALHG). The FZ domain occupies 45-162 (SKPPQCLDIP…PLDNDLCIAV (118 aa)). Intrachain disulfides connect Cys-50–Cys-113, Cys-60–Cys-106, Cys-97–Cys-132, Cys-121–Cys-159, Cys-125–Cys-149, Cys-178–Cys-250, Cys-181–Cys-252, and Cys-195–Cys-300. Positions 178–300 (CAQCEMEHSA…AVKFMFSYPC (123 aa)) constitute an NTR domain.

Belongs to the secreted frizzled-related protein (sFRP) family.

It is found in the secreted. In terms of biological role, soluble frizzled-related proteins (sFRPS) function as modulators of Wnt signaling through direct interaction with Wnts. They have a role in regulating cell growth and differentiation in specific cell types. SFRP5 may be involved in determining the polarity of photoreceptor, and perhaps, other cells in the retina. In Mus musculus (Mouse), this protein is Secreted frizzled-related protein 5 (Sfrp5).